The primary structure comprises 269 residues: Protein CURLY FLAG LEAF 1 (269 aa).

Positions 17-44 (SLNGGGGGGGGRRRGRRAAAAEGSDDSE) are disordered. The EAR motif lies at 47-52 (TVELNS). Positions 54 to 88 (VALPYHWEQCLDIRTGQVYYINWEDGTRTTIDPRS) constitute a WW domain. 2 disordered regions span residues 83 to 133 (TIDP…SGYT) and 174 to 218 (GDDE…SGAG). Composition is skewed to low complexity over residues 87–106 (RSSS…SSSR), 121–133 (AAAA…SGYT), and 180–202 (SSSS…AVSS). The span at 203-212 (TLSSFSPTDE) shows a compositional bias: polar residues.

As to quaternary structure, binds to HDG1.

Functionally, negatively regulates the cuticle development probably by interacting with the HD-ZIP IV transcription factor HDG1. This chain is Protein CURLY FLAG LEAF 1, found in Oryza sativa subsp. indica (Rice).